The primary structure comprises 31 residues: Cyclotide glopa C (31 aa).

Residues 1–31 constitute a cross-link (cyclopeptide (Gly-Asn)); the sequence is GDLPICGETCFEGGNCRIPGCTCVWPFCSKN. 3 disulfide bridges follow: cysteine 6-cysteine 21, cysteine 10-cysteine 23, and cysteine 16-cysteine 28.

Post-translationally, this is a cyclic peptide.

Probably participates in a plant defense mechanism. This chain is Cyclotide glopa C, found in Gloeospermum pauciflorum.